Here is a 265-residue protein sequence, read N- to C-terminus: RNA-binding protein 7 (265 aa).

G2 carries the post-translational modification N-acetylglycine. The 78-residue stretch at 10–87 folds into the RRM domain; that stretch reads RTLFVGNLET…RPIKIQFRSG (78 aa). ZCCHC8 binding stretches follow at residues 25-35 and 59-76; these read LLFELFHQAGP and HEVS…IKLF. A disordered region spans residues 91 to 125; it reads ASQDASVSYPQHHVGNLSPTSTSPNSYERTVGNVS. The span at 107–125 shows a compositional bias: polar residues; it reads LSPTSTSPNSYERTVGNVS. Phosphoserine; by MAPKAPK2 is present on S136. S137 carries the phosphoserine modification. R152 is modified (omega-N-methylarginine). Disordered stretches follow at residues 166 to 224 and 237 to 265; these read DQLG…HGSD and DDRN…SSRH. The span at 170–196 shows a compositional bias: polar residues; the sequence is FSPSAQPHGHTFNQSSSSQWRQDALSS. A Phosphoserine modification is found at S203. 2 stretches are compositionally biased toward basic and acidic residues: residues 207–224 and 237–256; these read LADR…HGSD and DDRN…DSSR.

Component of the nuclear exosome targeting (NEXT) complex composed of MTREX, ZCCHC8, and RBM7 that directs a subset of non-coding short-lived RNAs for exosomal degradation. Interacts with ZCCHC8 and SF3B2/SAP145. Binds to MTREX through ZCCHC8. Interacts with YWHAE and YWHAZ; these interactions are stress-dependent and RBM7 phosphorylation dependent; release RNA from the NEXT complex and may affect RNA targeting to the nuclear RNA exosomome for degradation. Interacts with MEPCE and LARP7, the core subunits of 7SK snRNP; upon genotoxic stress this interaction is enhanced, triggering the release of inactive P-TEFb complex from the core and P-TEFb complex activation. Post-translationally, phosphorylated at Ser-136 by MAPK14/p38-alpha-activated MAPKAPK2/MK2; this phosphorylation is stress-dependent; this phosphorylation decreases its RNA-binding capacity therefore affecting RNA nuclear exosome-mediated degradation. This phosphorylation mediates YWHAE and YWHAZ interactions.

It is found in the nucleus. Its subcellular location is the nucleoplasm. In terms of biological role, RNA-binding subunit of the trimeric nuclear exosome targeting (NEXT) complex, a complex that functions as an RNA exosome cofactor that directs a subset of non-coding short-lived RNAs for exosomal degradation. NEXT is involved in surveillance and turnover of aberrant transcripts and non-coding RNAs. Binds preferentially polyuridine sequences and associates with newly synthesized RNAs, including pre-mRNAs and short-lived exosome substrates such as promoter upstream transcripts (PROMPTs), enhancer RNAs (eRNAs), and 3'-extended products from small nuclear RNAs (snRNAs). Participates in several biological processes including DNA damage response (DDR) and stress response. During stress response, activation of the p38MAPK-MK2 pathway decreases RBM7-RNA-binding and subsequently the RNA exosome degradation activities, thereby modulating the turnover of non-coding transcriptome. Participates in DNA damage response (DDR), through its interaction with MEPCE and LARP7, the core subunits of 7SK snRNP complex, that release the positive transcription elongation factor b (P-TEFb) complex from the 7SK snRNP. In turn, activation of P-TEFb complex induces the transcription of P-TEFb-dependent DDR genes to promote cell viability. The polypeptide is RNA-binding protein 7 (Mus musculus (Mouse)).